Here is a 552-residue protein sequence, read N- to C-terminus: DNA ligase (552 aa).

Glutamate 229 contributes to the ATP binding site. The active-site N6-AMP-lysine intermediate is the lysine 231. ATP-binding residues include arginine 236 and glutamate 283. Residues glutamate 283 and glutamate 377 each coordinate Mg(2+). Residues lysine 382 and lysine 397 each contribute to the ATP site.

This sequence belongs to the ATP-dependent DNA ligase family. Interacts with host TOP2A and TOP2B. Mg(2+) serves as cofactor.

The protein resides in the host cytoplasm. It catalyses the reaction ATP + (deoxyribonucleotide)n-3'-hydroxyl + 5'-phospho-(deoxyribonucleotide)m = (deoxyribonucleotide)n+m + AMP + diphosphate.. DNA ligase that seals nicks in double-stranded DNA during DNA replication, DNA recombination and DNA repair. Recruits cellular topoisomerase II to sites of viral replication and assembly. Contributes to the repair of the viral genome following UV irradiation. This chain is DNA ligase (OPG180), found in Vaccinia virus (strain Western Reserve) (VACV).